An 89-amino-acid polypeptide reads, in one-letter code: UPF0223 protein BAMEG_4214 (89 aa).

This sequence belongs to the UPF0223 family.

The sequence is that of UPF0223 protein BAMEG_4214 from Bacillus anthracis (strain CDC 684 / NRRL 3495).